Reading from the N-terminus, the 159-residue chain is 2-C-methyl-D-erythritol 2,4-cyclodiphosphate synthase (159 aa).

Residues Asp-8 and His-10 each contribute to the a divalent metal cation site. Residues 8 to 10 and 34 to 35 contribute to the 4-CDP-2-C-methyl-D-erythritol 2-phosphate site; these read DVH and HS. Residue His-42 participates in a divalent metal cation binding. Residues 56 to 58, 132 to 135, and Arg-142 each bind 4-CDP-2-C-methyl-D-erythritol 2-phosphate; these read DIG and TTTE.

This sequence belongs to the IspF family. Homotrimer. It depends on a divalent metal cation as a cofactor.

The enzyme catalyses 4-CDP-2-C-methyl-D-erythritol 2-phosphate = 2-C-methyl-D-erythritol 2,4-cyclic diphosphate + CMP. It functions in the pathway isoprenoid biosynthesis; isopentenyl diphosphate biosynthesis via DXP pathway; isopentenyl diphosphate from 1-deoxy-D-xylulose 5-phosphate: step 4/6. Functionally, involved in the biosynthesis of isopentenyl diphosphate (IPP) and dimethylallyl diphosphate (DMAPP), two major building blocks of isoprenoid compounds. Catalyzes the conversion of 4-diphosphocytidyl-2-C-methyl-D-erythritol 2-phosphate (CDP-ME2P) to 2-C-methyl-D-erythritol 2,4-cyclodiphosphate (ME-CPP) with a corresponding release of cytidine 5-monophosphate (CMP). The sequence is that of 2-C-methyl-D-erythritol 2,4-cyclodiphosphate synthase from Chlorobium phaeobacteroides (strain BS1).